The primary structure comprises 1001 residues: Non-canonical poly(A) RNA polymerase protein Trf4-1 (1001 aa).

Low complexity-rich tracts occupy residues 44–86 (TING…NNSS) and 127–163 (RNST…STNG). 2 disordered regions span residues 44–92 (TING…PYLS) and 115–238 (QQQQ…AGGA). Residues 164–178 (PGAGTGTSTGAGGTG) show a composition bias toward gly residues. The segment covering 179–216 (TNSPATTASSTAATTTGPATSMSDTSNNPPQSTTTPAS) has biased composition (low complexity). Mn(2+) is bound by residues Asp-328 and Asp-330. The PAP-associated domain maps to 458-517 (NLGVLLLEFFELYGRRFNYMKIGISIKNGGRYMPKDELQRDMVDGHRPSLLCIEDPLTPG). 4 disordered regions span residues 631-652 (PTAH…PGAH), 687-740 (QQQQ…AQEV), 767-963 (ASNS…LRGT), and 977-1001 (SSES…RDER). A compositionally biased stretch (basic residues) spans 635-649 (GHSHAHSHSHGHAHP). Low complexity-rich tracts occupy residues 687–708 (QQQQ…NQSQ) and 768–788 (SNSW…TGSS). A compositionally biased stretch (gly residues) spans 827–841 (VGTGSNRGGGDGSGG). The segment covering 844-854 (YNQRNNHNSSG) has biased composition (polar residues). Residues 855 to 880 (YYHQQYYVPPPMQQQLSKSNSSSNYH) show a composition bias toward low complexity. Over residues 881 to 912 (QQHHHSHSHGNHSHRQQHHHQQQHHHQQRPQH) the composition is skewed to basic residues. 2 stretches are compositionally biased toward low complexity: residues 932–955 (SAGN…SNNS) and 977–992 (SSES…SSRS).

Belongs to the DNA polymerase type-B-like family. Requires Mn(2+) as cofactor.

Its subcellular location is the cytoplasm. The enzyme catalyses RNA(n) + ATP = RNA(n)-3'-adenine ribonucleotide + diphosphate. In terms of biological role, involved in a post-transcriptional quality control mechanism limiting inappropriate expression of genetic information. Polyadenylation is required for the degradative activity of the exosome on several of its nuclear RNA substrates. Polyadenylates RNA processing and degradation intermediates of snRNAs and mRNAs. This chain is Non-canonical poly(A) RNA polymerase protein Trf4-1, found in Drosophila melanogaster (Fruit fly).